Reading from the N-terminus, the 249-residue chain is Pyridoxine 5'-phosphate synthase (249 aa).

Residue Asn7 coordinates 3-amino-2-oxopropyl phosphate. 9–10 (DH) serves as a coordination point for 1-deoxy-D-xylulose 5-phosphate. Arg18 provides a ligand contact to 3-amino-2-oxopropyl phosphate. The active-site Proton acceptor is His43. 2 residues coordinate 1-deoxy-D-xylulose 5-phosphate: Arg45 and His50. Glu70 serves as the catalytic Proton acceptor. Thr100 serves as a coordination point for 1-deoxy-D-xylulose 5-phosphate. The active-site Proton donor is His190. Residues Gly191 and 212 to 213 (GH) each bind 3-amino-2-oxopropyl phosphate.

The protein belongs to the PNP synthase family. In terms of assembly, homooctamer; tetramer of dimers.

It localises to the cytoplasm. The catalysed reaction is 3-amino-2-oxopropyl phosphate + 1-deoxy-D-xylulose 5-phosphate = pyridoxine 5'-phosphate + phosphate + 2 H2O + H(+). The protein operates within cofactor biosynthesis; pyridoxine 5'-phosphate biosynthesis; pyridoxine 5'-phosphate from D-erythrose 4-phosphate: step 5/5. Catalyzes the complicated ring closure reaction between the two acyclic compounds 1-deoxy-D-xylulose-5-phosphate (DXP) and 3-amino-2-oxopropyl phosphate (1-amino-acetone-3-phosphate or AAP) to form pyridoxine 5'-phosphate (PNP) and inorganic phosphate. In Synechococcus sp. (strain CC9605), this protein is Pyridoxine 5'-phosphate synthase.